Reading from the N-terminus, the 305-residue chain is ADP,ATP carrier protein (305 aa).

Solcar repeat units lie at residues 8–101 (SNFA…IKAM), 112–204 (KWFA…LKPL), and 212–298 (NSFL…LQVI). Transmembrane regions (helical) follow at residues 10-37 (FAID…VKLL), 78-102 (TANV…KAMF), 110-130 (YAKW…LSLL), 180-201 (FLPS…YDSL), and 215-235 (LASF…SYPL). The ADP site is built by Arg-83 and Lys-95. Arg-239 serves as a coordination point for ADP. Positions 239–244 (RRRMMM) are important for transport activity. Positions 239–244 (RRRMMM) match the Nucleotide carrier signature motif motif. Residues 275–295 (CGANILRGVAGAGVISMYDQL) traverse the membrane as a helical segment.

The protein belongs to the mitochondrial carrier (TC 2.A.29) family. In terms of assembly, monomer.

The protein resides in the mitochondrion inner membrane. It catalyses the reaction ADP(in) + ATP(out) = ADP(out) + ATP(in). With respect to regulation, the matrix-open state (m-state) is inhibited by the membrane-permeable bongkrekic acid (BKA). The cytoplasmic-open state (c-state) is inhibited by the membrane-impermeable toxic inhibitor carboxyatractyloside (CATR). Its function is as follows. ADP:ATP antiporter that mediates import of ADP into the mitochondrial matrix for ATP synthesis, and export of ATP out to fuel the cell. Cycles between the cytoplasmic-open state (c-state) and the matrix-open state (m-state): operates by the alternating access mechanism with a single substrate-binding site intermittently exposed to either the cytosolic (c-state) or matrix (m-state) side of the inner mitochondrial membrane. In Kluyveromyces lactis (strain ATCC 8585 / CBS 2359 / DSM 70799 / NBRC 1267 / NRRL Y-1140 / WM37) (Yeast), this protein is ADP,ATP carrier protein (AAC).